A 1058-amino-acid polypeptide reads, in one-letter code: Leucine-rich repeat and coiled-coil domain-containing protein PF3D7_0703800 (1058 aa).

The span at M1 to T10 shows a compositional bias: basic residues. Residues M1–Y34 are disordered. Positions K11–Y34 are enriched in basic and acidic residues. Positions L515–N544 form a coiled coil. Positions E641–N661 are enriched in basic and acidic residues. Disordered regions lie at residues E641–V665 and N706–K728. A coiled-coil region spans residues N872 to N905.

This Plasmodium falciparum (isolate 3D7) protein is Leucine-rich repeat and coiled-coil domain-containing protein PF3D7_0703800.